The primary structure comprises 255 residues: Small ribosomal subunit protein uS2 (255 aa).

The protein belongs to the universal ribosomal protein uS2 family.

In Streptococcus thermophilus (strain ATCC BAA-491 / LMD-9), this protein is Small ribosomal subunit protein uS2.